Here is a 1238-residue protein sequence, read N- to C-terminus: Receptor-type tyrosine-protein phosphatase eta (1238 aa).

The N-terminal stretch at 1 to 28 is a signal peptide; that stretch reads MKPAARETRTPPRSPGLRWALLPLLLLL. The Extracellular portion of the chain corresponds to 29 to 876; sequence RQGQVLCAGA…LPQDPGVICG (848 aa). Positions 39–122 constitute a Fibronectin type-III 1 domain; the sequence is APNPIFDIEA…LNKTITTEPW (84 aa). N62, N78, N85, N90, N110, N114, N145, N164, N173, N182, N198, N207, N244, N253, N267, N278, N313, N317, N333, N366, N379, N398, N403, N437, N452, N488, N506, N538, N572, N576, N662, N668, N685, N691, N725, N811, and N838 each carry an N-linked (GlcNAc...) asparagine glycan. One can recognise a Fibronectin type-III 2 domain in the interval 170 to 266; the sequence is PGTNNSFAFP…GQPRNKVFKT (97 aa). Fibronectin type-III domains are found at residues 270–358, 359–443, 444–527, 528–621, 622–718, and 717–803; these read QVSD…SPDQ, VSDF…TDPS, AVTD…TQYT, RPSS…TEPE, PVTS…TDPP, and PPTP…SEVL. The helical transmembrane segment at 877 to 897 threads the bilayer; that stretch reads AVFGCIFGALAITAVGGFIFW. Over 898 to 1238 the chain is Cytoplasmic; it reads RKKRTDAKNN…MFGKTNGYIA (341 aa). Position 910 is a phosphoserine (S910). Residues 942-1199 enclose the Tyrosine-protein phosphatase domain; sequence FAEEYEDLKL…VFLNQCVLDI (258 aa). Substrate is bound by residues D1106, 1140-1146, and Q1184; that span reads CSAGVGR. The active-site Phosphocysteine intermediate is the C1140.

It belongs to the protein-tyrosine phosphatase family. Receptor class 3 subfamily. Monomer. Interacts with CTNNB1 (phosphorylated) and JUP (phosphorylated). Interacts with FLT3 (phosphorylated). Interacts with GAB1 and GRB2. In terms of tissue distribution, expressed at high levels in brain, kidney, spleen and intestine, and at lower levels in liver, lung, thymus and heart. Expressed at a high level in the myeloid cell line FDC-P2, and at a lower level in the pre-B lymphoid cell line WEHI-231 and the T hybridoma cell line HB21.7.31. Not expressed in the fibroblast cell line NIH3T3 or the erythroid cell line F5-5. Expressed in macrophages.

It is found in the cell membrane. The protein localises to the cell projection. Its subcellular location is the ruffle membrane. The protein resides in the cell junction. The catalysed reaction is O-phospho-L-tyrosyl-[protein] + H2O = L-tyrosyl-[protein] + phosphate. Its function is as follows. Tyrosine phosphatase which dephosphorylates or contributes to the dephosphorylation of CTNND1, FLT3, PDGFRB, MET, KDR, LYN, SRC, MAPK1, MAPK3, EGFR, TJP1, OCLN, PIK3R1 and PIK3R2. Plays a role in cell adhesion, migration, proliferation and differentiation. Has a role in megakaryocytes and platelet formation. Involved in vascular development. May be involved in the mechanism of contact inhibition of cell growth. Regulator of macrophage adhesion and spreading. Positively affects cell-matrix adhesion. Positive regulator of platelet activation and thrombosis. Negative regulator of cell proliferation. Negative regulator of PDGF-stimulated cell migration; through dephosphorylation of PDGFR. Positive regulator of endothelial cell survival, as well as of VEGF-induced SRC and AKT activation; through KDR dephosphorylation. Negative regulator of EGFR signaling pathway; through EGFR dephosphorylation. Enhances the barrier function of epithelial junctions during reassembly. Negatively regulates T-cell receptor (TCR) signaling. Upon T-cell TCR activation, it is up-regulated and excluded from the immunological synapses, while upon T-cell-antigen presenting cells (APC) disengagement, it is no longer excluded and can dephosphorylate PLCG1 and LAT to down-regulate prolongation of signaling. The chain is Receptor-type tyrosine-protein phosphatase eta (Ptprj) from Mus musculus (Mouse).